A 598-amino-acid polypeptide reads, in one-letter code: Sulfoacetaldehyde acetyltransferase (598 aa).

Belongs to the TPP enzyme family. Homotetramer. Requires Mg(2+) as cofactor. Thiamine diphosphate is required as a cofactor.

It localises to the cytoplasm. It carries out the reaction acetyl phosphate + sulfite + H(+) = sulfoacetaldehyde + phosphate. It participates in organosulfur degradation; taurine degradation via aerobic pathway; acetyl phosphate and sulfite from taurine: step 2/2. This Castellaniella defragrans (Alcaligenes defragrans) protein is Sulfoacetaldehyde acetyltransferase.